A 129-amino-acid chain; its full sequence is Large ribosomal subunit protein bL17 (129 aa).

This sequence belongs to the bacterial ribosomal protein bL17 family. As to quaternary structure, part of the 50S ribosomal subunit. Contacts protein L32.

The protein is Large ribosomal subunit protein bL17 of Desulfotalea psychrophila (strain LSv54 / DSM 12343).